We begin with the raw amino-acid sequence, 341 residues long: S-adenosylmethionine:tRNA ribosyltransferase-isomerase (341 aa).

It belongs to the QueA family. Monomer.

The protein localises to the cytoplasm. The enzyme catalyses 7-aminomethyl-7-carbaguanosine(34) in tRNA + S-adenosyl-L-methionine = epoxyqueuosine(34) in tRNA + adenine + L-methionine + 2 H(+). It participates in tRNA modification; tRNA-queuosine biosynthesis. Its function is as follows. Transfers and isomerizes the ribose moiety from AdoMet to the 7-aminomethyl group of 7-deazaguanine (preQ1-tRNA) to give epoxyqueuosine (oQ-tRNA). The protein is S-adenosylmethionine:tRNA ribosyltransferase-isomerase of Chlorobium chlorochromatii (strain CaD3).